Reading from the N-terminus, the 76-residue chain is Exodeoxyribonuclease 7 small subunit (76 aa).

Belongs to the XseB family. In terms of assembly, heterooligomer composed of large and small subunits.

The protein localises to the cytoplasm. The catalysed reaction is Exonucleolytic cleavage in either 5'- to 3'- or 3'- to 5'-direction to yield nucleoside 5'-phosphates.. In terms of biological role, bidirectionally degrades single-stranded DNA into large acid-insoluble oligonucleotides, which are then degraded further into small acid-soluble oligonucleotides. This chain is Exodeoxyribonuclease 7 small subunit, found in Staphylococcus epidermidis (strain ATCC 35984 / DSM 28319 / BCRC 17069 / CCUG 31568 / BM 3577 / RP62A).